Here is a 90-residue protein sequence, read N- to C-terminus: Acylphosphatase (90 aa).

The region spanning 5–90 (CLKAWVTGRV…DPPPGTFELG (86 aa)) is the Acylphosphatase-like domain. Active-site residues include arginine 20 and asparagine 38.

It belongs to the acylphosphatase family.

The catalysed reaction is an acyl phosphate + H2O = a carboxylate + phosphate + H(+). The chain is Acylphosphatase (acyP) from Chromohalobacter salexigens (strain ATCC BAA-138 / DSM 3043 / CIP 106854 / NCIMB 13768 / 1H11).